Consider the following 506-residue polypeptide: MNMAEIAQLGVSNPYKQQYENYIGGAWVPPAGGEYFESTTPITGKPFTRVPRSGQQDVDAALDAAHAAKAAWARTSTTERANILNRIADRIEANLKLLAVAESIDNGKPVRETTAADLPLAVDHFRYFAGCIRAQEGGISEIDADTIAYHFHEPLGVVGQIIPWNFPLLMATWKLAPALAAGNCVVLKPAEQTPASILVLMEVIGDLLPPGVVNVINGFGLEAGKPLASSPRISKVAFTGETTTGRLIMQYASQNLIPVTLELGGKSPNIFFEDVLAADDAFFDKALEGFAMFALNQGEVCTCPSRALIQESIYDRFMERALKRVAAIRQGHPLDTGTMIGAQASAEQLEKILSYIDLGRKEGAQCLTGGERNVLDGDLAGGYYVKPTVFAGHNKMRIFQEEIFGPVVSVTTFKDEEEALAIANDTLYGLGAGVWTRDGARAFRMGRGIQAGRVWTNCYHAYPAHAAFGGYKQSGIGRENHRMMLDHYQQTKNLLVSYSPNALGFF.

Residue 240–245 participates in NAD(+) binding; that stretch reads GETTTG. Catalysis depends on residues Glu-262 and Cys-301.

The protein belongs to the aldehyde dehydrogenase family.

It catalyses the reaction an aldehyde + NAD(+) + H2O = a carboxylate + NADH + 2 H(+). Its pathway is alcohol metabolism; ethanol degradation; acetate from ethanol: step 2/2. The protein operates within ketone degradation; acetoin degradation. Involved in the catabolism of acetoin and ethanol. The protein is Acetaldehyde dehydrogenase 2 (acoD) of Cupriavidus necator (strain ATCC 17699 / DSM 428 / KCTC 22496 / NCIMB 10442 / H16 / Stanier 337) (Ralstonia eutropha).